The sequence spans 257 residues: Hydroxyacylglutathione hydrolase (257 aa).

Positions 54, 56, 58, 59, 113, 137, and 175 each coordinate Zn(2+).

This sequence belongs to the metallo-beta-lactamase superfamily. Glyoxalase II family. As to quaternary structure, monomer. Zn(2+) serves as cofactor.

It carries out the reaction an S-(2-hydroxyacyl)glutathione + H2O = a 2-hydroxy carboxylate + glutathione + H(+). It participates in secondary metabolite metabolism; methylglyoxal degradation; (R)-lactate from methylglyoxal: step 2/2. Its function is as follows. Thiolesterase that catalyzes the hydrolysis of S-D-lactoyl-glutathione to form glutathione and D-lactic acid. The protein is Hydroxyacylglutathione hydrolase of Trichodesmium erythraeum (strain IMS101).